The chain runs to 330 residues: Aspartate--ammonia ligase (330 aa).

This sequence belongs to the class-II aminoacyl-tRNA synthetase family. AsnA subfamily.

Its subcellular location is the cytoplasm. It carries out the reaction L-aspartate + NH4(+) + ATP = L-asparagine + AMP + diphosphate + H(+). It functions in the pathway amino-acid biosynthesis; L-asparagine biosynthesis; L-asparagine from L-aspartate (ammonia route): step 1/1. The protein is Aspartate--ammonia ligase of Actinobacillus pleuropneumoniae serotype 7 (strain AP76).